The following is an 86-amino-acid chain: Small ribosomal subunit protein bS20 (86 aa).

The tract at residues 1-25 (MANIKSQQKRNKTNERARLRNKSVK) is disordered.

The protein belongs to the bacterial ribosomal protein bS20 family.

Binds directly to 16S ribosomal RNA. This Mycobacterium avium (strain 104) protein is Small ribosomal subunit protein bS20.